The chain runs to 467 residues: Phytase A (467 aa).

An N-terminal signal peptide occupies residues 1 to 23 (MGVSAVLLPLYLLAGVTSGLAVP). Asn27 is a glycosylation site (N-linked (GlcNAc...) asparagine). The cysteines at positions 31 and 40 are disulfide-linked. 1D-myo-inositol hexakisphosphate contacts are provided by Gln50 and Tyr51. Asn59 carries an N-linked (GlcNAc...) asparagine glycan. 4 disulfides stabilise this stretch: Cys71-Cys414, Cys215-Cys465, Cys264-Cys282, and Cys436-Cys444. Arg81, His82, Arg85, and Thr88 together coordinate 1D-myo-inositol hexakisphosphate. His82 functions as the Nucleophile in the catalytic mechanism. Asn105 and Asn120 each carry an N-linked (GlcNAc...) asparagine glycan. Residue Arg165 coordinates 1D-myo-inositol hexakisphosphate. Asn207 and Asn230 each carry an N-linked (GlcNAc...) asparagine glycan. 1D-myo-inositol hexakisphosphate is bound at residue Lys301. N-linked (GlcNAc...) asparagine glycosylation is found at Asn339 and Asn352. His361 and Asp362 together coordinate 1D-myo-inositol hexakisphosphate. 2 N-linked (GlcNAc...) asparagine glycosylation sites follow: Asn376 and Asn388.

The protein belongs to the histidine acid phosphatase family. In terms of assembly, monomer.

It localises to the secreted. The catalysed reaction is 1D-myo-inositol hexakisphosphate + H2O = 1D-myo-inositol 1,2,4,5,6-pentakisphosphate + phosphate. The enzyme catalyses 1D-myo-inositol 1,2,4,5,6-pentakisphosphate + H2O = 1D-myo-inositol 1,2,5,6-tetrakisphosphate + phosphate. It carries out the reaction 1D-myo-inositol 1,2,5,6-tetrakisphosphate + H2O = 1D-myo-inositol 1,2,6-trisphosphate + phosphate. It catalyses the reaction 1D-myo-inositol 1,2,6-trisphosphate + H2O = 1D-myo-inositol 1,2-bisphosphate + phosphate. The catalysed reaction is 1D-myo-inositol 1,2-bisphosphate + H2O = 1D-myo-inositol 2-phosphate + phosphate. Catalyzes the phosphate monoester hydrolysis of phytic acid (myo-inositol hexakisphosphate), which results in the stepwise formation of myo-inositol pentakis-, tetrakis-, tris-, bis-, and monophosphates, as well as the liberation of inorganic phosphate. Myo-inositol 2-monophosphate is the end product. The protein is Phytase A (phyA) of Aspergillus awamori (Black koji mold).